The sequence spans 796 residues: Peroxisome proliferator-activated receptor gamma coactivator 1-alpha (796 aa).

K77 bears the N6-acetyllysine mark. The segment at 98-138 (PVDEDGLPSFDALTDGDVTTENEASPSSMPDGTPPPQEAEE) is disordered. The span at 114–127 (DVTTENEASPSSMP) shows a compositional bias: polar residues. The LXXLL motif signature appears at 142 to 146 (LKKLL). The residue at position 144 (K144) is an N6-acetyllysine. T176 is subject to Phosphothreonine; by AMPK. The residue at position 182 (K182) is an N6-acetyllysine. Positions 211-275 (YLTTNDDPPH…NDPKGSPFEN (65 aa)) are disordered. A compositionally biased stretch (basic and acidic residues) spans 217 to 235 (DPPHTKPTENRNSSRDKCT). Polar residues predominate over residues 242-258 (TQSQTQHLQAKPTTLSL). Residues K252, K269, K276, and K319 each carry the N6-acetyllysine modification. Disordered stretches follow at residues 288-374 (GTAG…AKRP) and 398-452 (TSQE…RKQL). The interval 291 to 337 (GLTPPTTPPHKANQDNPFRASPKLKPSCKTVVPPPSKKARYSESSCT) is interaction with PPARG. Polar residues predominate over residues 332 to 344 (SESSCTQGSNSTK). N6-acetyllysine is present on residues K345 and K411. The mediates interaction with RNF34 stretch occupies residues 348-796 (EQSELYAQLS…LKEAQRSLRR (449 aa)). Positions 401 to 412 (ELHDSRQLENKD) are enriched in basic and acidic residues. Polar residues-rich tracts occupy residues 413-428 (APSSNGPGQIHSSTDS) and 439-450 (VSRQVSPGSTRK). K450 carries the post-translational modification N6-acetyllysine. The residue at position 538 (S538) is a Phosphoserine; by AMPK. Disordered regions lie at residues 542 to 597 (FNSP…SSSR), 609 to 637 (HRTHRNSPLCASRSRSPHSRRPRYDSYEE), and 648 to 667 (YRREYEKRESERAKQRERQR). The segment covering 562 to 577 (QRMRSRSRSFSRHRSC) has biased composition (basic residues). The span at 578–597 (SRSPYSRSRSRSPGSRSSSR) shows a compositional bias: low complexity. An RRM domain is found at 675–751 (RVIYVGKIRP…TDFELYFCGR (77 aa)). 2 positions are modified to N6-acetyllysine: K756 and K777.

As to quaternary structure, homooligomer. Interacts with MYBBP1A; inhibits MYBBP1A transcriptional activation. Interacts with PRDM16, LPIN1 and PML. Interacts (via LXXLL motif) with RORA and RORC (via AF-2 motif); activates RORA and RORC transcriptional activation. Interacts with LRPPRC. Interacts with FOXO1. Interacts with NR5A2. Post-translationally, phosphorylation by AMPK in skeletal muscle increases activation of its own promoter. Phosphorylated by CLK2. In terms of processing, heavily acetylated by KAT2A/GCN5 under conditions of high nutrients, leading to inactivation of PPARGC1A. Deacetylated by SIRT1 in low nutrients/high NAD conditions, leading to its activation. Ubiquitinated. Ubiquitination by RNF34 induces proteasomal degradation.

It is found in the nucleus. It localises to the PML body. In terms of biological role, transcriptional coactivator for steroid receptors and nuclear receptors. Greatly increases the transcriptional activity of PPARG and thyroid hormone receptor on the uncoupling protein promoter. Can regulate key mitochondrial genes that contribute to the program of adaptive thermogenesis. Plays an essential role in metabolic reprogramming in response to dietary availability through coordination of the expression of a wide array of genes involved in glucose and fatty acid metabolism. Acts as a key regulator of gluconeogenesis: stimulates hepatic gluconeogenesis by increasing the expression of gluconeogenic enzymes, and acting together with FOXO1 to promote the fasting gluconeogenic program. Induces the expression of PERM1 in the skeletal muscle in an ESRRA-dependent manner. Also involved in the integration of the circadian rhythms and energy metabolism. Required for oscillatory expression of clock genes, such as BMAL1 and NR1D1, through the coactivation of RORA and RORC, and metabolic genes, such as PDK4 and PEPCK. In Bos taurus (Bovine), this protein is Peroxisome proliferator-activated receptor gamma coactivator 1-alpha (PPARGC1A).